We begin with the raw amino-acid sequence, 300 residues long: NAD kinase (300 aa).

Asp-75 (proton acceptor) is an active-site residue. NAD(+) contacts are provided by residues 75-76 (DG), 149-150 (ND), Arg-177, Asp-179, 190-195 (TAYALS), Ala-214, and Gln-248.

Belongs to the NAD kinase family. Requires a divalent metal cation as cofactor.

It is found in the cytoplasm. The enzyme catalyses NAD(+) + ATP = ADP + NADP(+) + H(+). Its function is as follows. Involved in the regulation of the intracellular balance of NAD and NADP, and is a key enzyme in the biosynthesis of NADP. Catalyzes specifically the phosphorylation on 2'-hydroxyl of the adenosine moiety of NAD to yield NADP. The protein is NAD kinase of Burkholderia cenocepacia (strain ATCC BAA-245 / DSM 16553 / LMG 16656 / NCTC 13227 / J2315 / CF5610) (Burkholderia cepacia (strain J2315)).